A 719-amino-acid polypeptide reads, in one-letter code: DNA ligase (719 aa).

NAD(+) contacts are provided by residues 42 to 46, 91 to 92, and Glu-125; these read DAEYD and SL. Lys-127 functions as the N6-AMP-lysine intermediate in the catalytic mechanism. Positions 148, 184, 300, and 324 each coordinate NAD(+). Cys-429, Cys-432, Cys-447, and Cys-453 together coordinate Zn(2+). The BRCT domain occupies 638–719; that stretch reads TASSPIAGKT…WLQLIEGSYI (82 aa).

Belongs to the NAD-dependent DNA ligase family. LigA subfamily. It depends on Mg(2+) as a cofactor. Mn(2+) is required as a cofactor.

It carries out the reaction NAD(+) + (deoxyribonucleotide)n-3'-hydroxyl + 5'-phospho-(deoxyribonucleotide)m = (deoxyribonucleotide)n+m + AMP + beta-nicotinamide D-nucleotide.. Its function is as follows. DNA ligase that catalyzes the formation of phosphodiester linkages between 5'-phosphoryl and 3'-hydroxyl groups in double-stranded DNA using NAD as a coenzyme and as the energy source for the reaction. It is essential for DNA replication and repair of damaged DNA. This chain is DNA ligase, found in Bartonella quintana (strain Toulouse) (Rochalimaea quintana).